The chain runs to 346 residues: S-adenosylmethionine:tRNA ribosyltransferase-isomerase (346 aa).

The protein belongs to the QueA family. Monomer.

The protein resides in the cytoplasm. The catalysed reaction is 7-aminomethyl-7-carbaguanosine(34) in tRNA + S-adenosyl-L-methionine = epoxyqueuosine(34) in tRNA + adenine + L-methionine + 2 H(+). The protein operates within tRNA modification; tRNA-queuosine biosynthesis. In terms of biological role, transfers and isomerizes the ribose moiety from AdoMet to the 7-aminomethyl group of 7-deazaguanine (preQ1-tRNA) to give epoxyqueuosine (oQ-tRNA). The chain is S-adenosylmethionine:tRNA ribosyltransferase-isomerase from Lysinibacillus sphaericus (strain C3-41).